A 124-amino-acid polypeptide reads, in one-letter code: MRHYEIVFIVHPDQSEQVPAMIERYKQLVTSQNGNVHRVEDWGRRQMAYMIQKLAKAHYVCLNIECGKETLAELEHAFKFNDAVLRHLIVQTKKAETAPSPMMKEVQREEARKAAQTTTEGQAA.

Residues 96 to 124 are disordered; sequence ETAPSPMMKEVQREEARKAAQTTTEGQAA. Polar residues predominate over residues 115-124; the sequence is AQTTTEGQAA.

Belongs to the bacterial ribosomal protein bS6 family.

Functionally, binds together with bS18 to 16S ribosomal RNA. This chain is Small ribosomal subunit protein bS6, found in Cupriavidus necator (strain ATCC 17699 / DSM 428 / KCTC 22496 / NCIMB 10442 / H16 / Stanier 337) (Ralstonia eutropha).